Reading from the N-terminus, the 610-residue chain is UvrABC system protein C (610 aa).

Residues 16–94 (SQPGVYRMYD…IKLYQPRYNV (79 aa)) form the GIY-YIG domain. A UVR domain is found at 204-239 (DQVLTQLIARMEKASQDLAFEEAARIRDQIQAVRRV).

Belongs to the UvrC family. Interacts with UvrB in an incision complex.

The protein resides in the cytoplasm. Functionally, the UvrABC repair system catalyzes the recognition and processing of DNA lesions. UvrC both incises the 5' and 3' sides of the lesion. The N-terminal half is responsible for the 3' incision and the C-terminal half is responsible for the 5' incision. The chain is UvrABC system protein C from Salmonella heidelberg (strain SL476).